Reading from the N-terminus, the 162-residue chain is ATP synthase subunit b (162 aa).

Residues 6–25 (TLFTLVTFLVLMLAVGKVAW) form a helical membrane-spanning segment.

The protein belongs to the ATPase B chain family. In terms of assembly, F-type ATPases have 2 components, F(1) - the catalytic core - and F(0) - the membrane proton channel. F(1) has five subunits: alpha(3), beta(3), gamma(1), delta(1), epsilon(1). F(0) has three main subunits: a(1), b(2) and c(10-14). The alpha and beta chains form an alternating ring which encloses part of the gamma chain. F(1) is attached to F(0) by a central stalk formed by the gamma and epsilon chains, while a peripheral stalk is formed by the delta and b chains.

It is found in the cell membrane. Functionally, f(1)F(0) ATP synthase produces ATP from ADP in the presence of a proton or sodium gradient. F-type ATPases consist of two structural domains, F(1) containing the extramembraneous catalytic core and F(0) containing the membrane proton channel, linked together by a central stalk and a peripheral stalk. During catalysis, ATP synthesis in the catalytic domain of F(1) is coupled via a rotary mechanism of the central stalk subunits to proton translocation. Its function is as follows. Component of the F(0) channel, it forms part of the peripheral stalk, linking F(1) to F(0). The sequence is that of ATP synthase subunit b from Lacticaseibacillus casei (strain BL23) (Lactobacillus casei).